A 142-amino-acid polypeptide reads, in one-letter code: Universal stress protein C (142 aa).

This sequence belongs to the universal stress protein A family.

The protein localises to the cytoplasm. Required for resistance to DNA-damaging agents. The protein is Universal stress protein C (uspC) of Salmonella typhimurium (strain LT2 / SGSC1412 / ATCC 700720).